We begin with the raw amino-acid sequence, 330 residues long: AH receptor-interacting protein (330 aa).

A PPIase FKBP-type domain is found at 31-121 (GTKATFHFRT…KDPLEGQRHC (91 aa)). Ser-43 carries the phosphoserine modification. TPR repeat units lie at residues 179-212 (VPLI…LKNL), 231-264 (TPLL…YDDN), and 265-298 (VKAY…DPAL).

Interacts with RET in the pituitary gland; this interaction prevents the formation of the AIP-survivin complex.

The protein resides in the cytoplasm. Its function is as follows. May play a positive role in AHR-mediated (aromatic hydrocarbon receptor) signaling, possibly by influencing its receptivity for ligand and/or its nuclear targeting. In Rattus norvegicus (Rat), this protein is AH receptor-interacting protein (Aip).